The chain runs to 124 residues: Small ribosomal subunit protein bS6m (124 aa).

The protein belongs to the bacterial ribosomal protein bS6 family. In terms of assembly, component of the mitochondrial ribosome small subunit (28S) which comprises a 12S rRNA and about 30 distinct proteins.

It localises to the mitochondrion. This chain is Small ribosomal subunit protein bS6m (MRPS6), found in Bos taurus (Bovine).